The sequence spans 246 residues: Acetoacetate decarboxylase (246 aa).

K115 serves as the catalytic Schiff-base intermediate with acetoacetate.

The protein belongs to the ADC family.

It carries out the reaction acetoacetate + H(+) = acetone + CO2. Functionally, catalyzes the conversion of acetoacetate to acetone and carbon dioxide. The chain is Acetoacetate decarboxylase from Clostridium beijerinckii (Clostridium MP).